The following is a 625-amino-acid chain: Probable potassium transport system protein Kup (625 aa).

12 helical membrane-spanning segments follow: residues 10–30 (LAAL…TSPL), 50–70 (LLGV…LKYV), 102–122 (YFPL…DSVI), 135–155 (LGVA…AILV), 172–192 (FGPV…VNII), 214–234 (GFLA…AEAL), 251–271 (FLIA…LLLL), 284–304 (LGAW…IIAS), 340–360 (IYIP…VIGF), 369–389 (AYGI…FFVI), 397–417 (LILC…LFSA), and 422–442 (LFHG…LMLT).

This sequence belongs to the HAK/KUP transporter (TC 2.A.72) family.

The protein resides in the cell inner membrane. The catalysed reaction is K(+)(in) + H(+)(in) = K(+)(out) + H(+)(out). Its function is as follows. Transport of potassium into the cell. Likely operates as a K(+):H(+) symporter. This chain is Probable potassium transport system protein Kup, found in Herminiimonas arsenicoxydans.